Reading from the N-terminus, the 237-residue chain is Orotidine 5'-phosphate decarboxylase (237 aa).

Substrate contacts are provided by residues aspartate 10, lysine 33, 60 to 69 (DLKLHDIPNT), threonine 124, arginine 186, glutamine 195, glycine 215, and arginine 216. The active-site Proton donor is lysine 62.

This sequence belongs to the OMP decarboxylase family. Type 1 subfamily. In terms of assembly, homodimer.

The enzyme catalyses orotidine 5'-phosphate + H(+) = UMP + CO2. It functions in the pathway pyrimidine metabolism; UMP biosynthesis via de novo pathway; UMP from orotate: step 2/2. Its function is as follows. Catalyzes the decarboxylation of orotidine 5'-monophosphate (OMP) to uridine 5'-monophosphate (UMP). This is Orotidine 5'-phosphate decarboxylase from Lactiplantibacillus plantarum (strain ATCC BAA-793 / NCIMB 8826 / WCFS1) (Lactobacillus plantarum).